Consider the following 880-residue polypeptide: Pyruvate, phosphate dikinase (880 aa).

An N-terminal region spans residues 1–348 (MNKLIYYFGN…LYILQTRTAK (348 aa)). Arg97 contributes to the ATP binding site. The interval 349 to 405 (RTAIAAINIAVQMVKEKLISKEQALMRIDPESLNQLLHTRIDYSKGLTSIAEGLPAS) is linker 1. Positions 406–503 (PGAATGIVVF…VIKQGDIITI (98 aa)) are central. Position 458 is a phosphothreonine; by PDRP1 (Thr458). His460 acts as the Tele-phosphohistidine intermediate in catalysis. Positions 504–538 (DGGSGKIFLGEMPLIQPTFSEESKLILDWADEISS) are linker 2. Positions 539–880 (LKVRANAETV…AAQAKIKQGS (342 aa)) are C-terminal. Substrate-binding residues include Arg566, Arg622, Glu750, Gly771, Thr772, Asn773, and Asp774. Mg(2+) is bound at residue Glu750. Residue Asp774 participates in Mg(2+) binding. Cys836 functions as the Proton donor in the catalytic mechanism.

This sequence belongs to the PEP-utilizing enzyme family. In terms of assembly, homodimer. Mg(2+) serves as cofactor. Phosphorylation of Thr-458 in the dark inactivates the enzyme. Dephosphorylation upon light stimulation reactivates the enzyme.

It catalyses the reaction pyruvate + phosphate + ATP = phosphoenolpyruvate + AMP + diphosphate + H(+). With respect to regulation, activated by light-induced dephosphorylation. Inhibited by dark-induced phosphorylation. Both reactions are catalyzed by PDRP1. Catalyzes the reversible phosphorylation of pyruvate and phosphate. This chain is Pyruvate, phosphate dikinase (ppdK), found in Rickettsia prowazekii (strain Madrid E).